We begin with the raw amino-acid sequence, 293 residues long: Acetylglutamate kinase (293 aa).

Residues 67 to 68, R89, and N190 each bind substrate; that span reads GG.

This sequence belongs to the acetylglutamate kinase family. ArgB subfamily.

The protein resides in the cytoplasm. It carries out the reaction N-acetyl-L-glutamate + ATP = N-acetyl-L-glutamyl 5-phosphate + ADP. Its pathway is amino-acid biosynthesis; L-arginine biosynthesis; N(2)-acetyl-L-ornithine from L-glutamate: step 2/4. Catalyzes the ATP-dependent phosphorylation of N-acetyl-L-glutamate. This Nitrosospira multiformis (strain ATCC 25196 / NCIMB 11849 / C 71) protein is Acetylglutamate kinase.